Consider the following 382-residue polypeptide: 1-deoxy-D-xylulose 5-phosphate reductoisomerase (382 aa).

NADPH-binding residues include threonine 10, glycine 11, serine 12, isoleucine 13, glycine 36, and asparagine 122. 1-deoxy-D-xylulose 5-phosphate is bound at residue lysine 123. NADPH is bound at residue glutamate 124. Position 148 (aspartate 148) interacts with Mn(2+). 1-deoxy-D-xylulose 5-phosphate contacts are provided by serine 149, glutamate 150, serine 174, and histidine 197. Residue glutamate 150 coordinates Mn(2+). Glycine 203 provides a ligand contact to NADPH. Residues serine 210, asparagine 215, lysine 216, and glutamate 219 each contribute to the 1-deoxy-D-xylulose 5-phosphate site. Glutamate 219 contacts Mn(2+).

This sequence belongs to the DXR family. It depends on Mg(2+) as a cofactor. Mn(2+) is required as a cofactor.

It carries out the reaction 2-C-methyl-D-erythritol 4-phosphate + NADP(+) = 1-deoxy-D-xylulose 5-phosphate + NADPH + H(+). The protein operates within isoprenoid biosynthesis; isopentenyl diphosphate biosynthesis via DXP pathway; isopentenyl diphosphate from 1-deoxy-D-xylulose 5-phosphate: step 1/6. Catalyzes the NADPH-dependent rearrangement and reduction of 1-deoxy-D-xylulose-5-phosphate (DXP) to 2-C-methyl-D-erythritol 4-phosphate (MEP). In Pelodictyon phaeoclathratiforme (strain DSM 5477 / BU-1), this protein is 1-deoxy-D-xylulose 5-phosphate reductoisomerase.